We begin with the raw amino-acid sequence, 199 residues long: MTDQIRMAQASAGMNLSDSVYERLLRERIIFLGTQVDDEIANKLCAQILLLSAEDPTRDISLYINSPGGSVTAGMAIYDTMKYSPCDIATYGMGLAASMGQFLLSGGTKGKRFALPHARIMMHQPSAGVGGTAADIAIQAEQFAQTKREMAELIAEHTGQSFEQITKDSDRDRWFTAQQAKEYGIVDHVIESAQGPLSN.

Ser98 acts as the Nucleophile in catalysis. His123 is a catalytic residue.

It belongs to the peptidase S14 family. Fourteen ClpP subunits assemble into 2 heptameric rings which stack back to back to give a disk-like structure with a central cavity, resembling the structure of eukaryotic proteasomes.

It is found in the cytoplasm. It carries out the reaction Hydrolysis of proteins to small peptides in the presence of ATP and magnesium. alpha-casein is the usual test substrate. In the absence of ATP, only oligopeptides shorter than five residues are hydrolyzed (such as succinyl-Leu-Tyr-|-NHMec, and Leu-Tyr-Leu-|-Tyr-Trp, in which cleavage of the -Tyr-|-Leu- and -Tyr-|-Trp bonds also occurs).. Functionally, cleaves peptides in various proteins in a process that requires ATP hydrolysis. Has a chymotrypsin-like activity. Plays a major role in the degradation of misfolded proteins. This Corynebacterium diphtheriae (strain ATCC 700971 / NCTC 13129 / Biotype gravis) protein is ATP-dependent Clp protease proteolytic subunit 2.